Reading from the N-terminus, the 258-residue chain is uncharacterized protein (258 aa).

This is an uncharacterized protein from Haemophilus influenzae (Bacteriophage HP1).